We begin with the raw amino-acid sequence, 99 residues long: uncharacterized protein (99 aa).

A signal peptide spans 1 to 19 (MLGMIRWVVEGTLVAMLLS). The tract at residues 71–99 (DGFGRINDSGPKRRGRDQSQYSSRFVELD) is disordered.

The protein localises to the cytoplasm. This is an uncharacterized protein from Saccharomyces cerevisiae (strain ATCC 204508 / S288c) (Baker's yeast).